Here is an 800-residue protein sequence, read N- to C-terminus: Ion-translocating oxidoreductase complex subunit C (800 aa).

2 consecutive 4Fe-4S ferredoxin-type domains span residues 367–398 and 408–437; these read DEFS…QQLY and KARG…VQYY. [4Fe-4S] cluster is bound by residues cysteine 378, cysteine 381, cysteine 384, cysteine 388, cysteine 417, cysteine 420, cysteine 423, and cysteine 427. 5 stretches are compositionally biased toward low complexity: residues 536-553, 571-583, 599-617, 647-667, and 675-690; these read GATP…APAP, AKQA…PAAT, AAIA…APAA, AKQA…ADPA, and AAIA…KQAA. Disordered regions lie at residues 536-558, 571-631, and 647-706; these read GATP…DDPR, AKQA…QDDP, and AKQA…ENTD. Polar residues predominate over residues 693-705; the sequence is HATTEPVTVQENT.

This sequence belongs to the 4Fe4S bacterial-type ferredoxin family. RnfC subfamily. As to quaternary structure, the complex is composed of six subunits: RnfA, RnfB, RnfC, RnfD, RnfE and RnfG. Requires [4Fe-4S] cluster as cofactor.

It localises to the cell inner membrane. Functionally, part of a membrane-bound complex that couples electron transfer with translocation of ions across the membrane. The sequence is that of Ion-translocating oxidoreductase complex subunit C from Edwardsiella ictaluri (strain 93-146).